Consider the following 906-residue polypeptide: Ribonucleoside-diphosphate reductase large subunit-like protein (906 aa).

Disordered regions lie at residues Met1–Thr70 and Val89–Phe129. Residues Pro98 to Arg109 are compositionally biased toward polar residues.

This sequence belongs to the ribonucleoside diphosphate reductase large chain family.

It localises to the virion. The protein localises to the host cytoplasm. Does not possess a ribonucleotide reductase activity. Betaherpesviruses probably use another strategy to expand the dNTP pool in a quiescent host cell. In Human cytomegalovirus (strain AD169) (HHV-5), this protein is Ribonucleoside-diphosphate reductase large subunit-like protein.